The chain runs to 225 residues: UPF0758 protein BCE33L4198 (225 aa).

One can recognise an MPN domain in the interval 103-225 (SIRNPEDCAR…FVSLKEKGHI (123 aa)). 3 residues coordinate Zn(2+): H174, H176, and D187. The short motif at 174 to 187 (HNHPSGDPAPSRED) is the JAMM motif element.

It belongs to the UPF0758 family.

This is UPF0758 protein BCE33L4198 from Bacillus cereus (strain ZK / E33L).